Consider the following 98-residue polypeptide: Sm-like protein LSM3B (98 aa).

The residue at position 2 (Ser-2) is an N-acetylserine. One can recognise a Sm domain in the interval 11 to 96 (EPLDLIRLSL…VILVSPPLRT (86 aa)).

This sequence belongs to the snRNP Sm proteins family. Component of the heptameric LSM1-LSM7 complex that forms a seven-membered ring structure with a donut shape. The LSM subunits are arranged in the order LSM1, LSM2, LSM3, LSM6, LSM5, LSM7 and LSM4. Component of the heptameric LSM2-LSM8 complex that forms a seven-membered ring structure with a donut shape. The LSM subunits are arranged in the order LSM8, LSM2, LSM3, LSM6, LSM5, LSM7 and LSM4. LSM3B subunit interacts only with its two neighboring subunits, LSM2 and LSM6A or LSM6B. As to expression, expressed in roots, leaves, stems, flowers and siliques.

The protein resides in the cytoplasm. Its subcellular location is the nucleus. In terms of biological role, component of LSM protein complexes, which are involved in RNA processing. Component of the cytoplasmic LSM1-LSM7 complex which is involved in mRNA degradation by promoting decapping and leading to accurate 5'-3' mRNA decay. The cytoplasmic LSM1-LSM7 complex regulates developmental gene expression by the decapping of specific development-related transcripts. Component of the nuclear LSM2-LSM8 complex which is involved splicing nuclear mRNAs. LSM2-LSM8 binds directly to the U6 small nuclear RNAs (snRNAs) and is essential for accurate splicing of selected development-related mRNAs through the stabilization of the spliceosomal U6 snRNA. Plays a critical role in the regulation of development-related gene expression. The protein is Sm-like protein LSM3B of Arabidopsis thaliana (Mouse-ear cress).